Reading from the N-terminus, the 227-residue chain is Enolase-phosphatase E1 (227 aa).

Belongs to the HAD-like hydrolase superfamily. MasA/MtnC family. In terms of assembly, monomer. Mg(2+) serves as cofactor.

It carries out the reaction 5-methylsulfanyl-2,3-dioxopentyl phosphate + H2O = 1,2-dihydroxy-5-(methylsulfanyl)pent-1-en-3-one + phosphate. The protein operates within amino-acid biosynthesis; L-methionine biosynthesis via salvage pathway; L-methionine from S-methyl-5-thio-alpha-D-ribose 1-phosphate: step 3/6. It functions in the pathway amino-acid biosynthesis; L-methionine biosynthesis via salvage pathway; L-methionine from S-methyl-5-thio-alpha-D-ribose 1-phosphate: step 4/6. Bifunctional enzyme that catalyzes the enolization of 2,3-diketo-5-methylthiopentyl-1-phosphate (DK-MTP-1-P) into the intermediate 2-hydroxy-3-keto-5-methylthiopentenyl-1-phosphate (HK-MTPenyl-1-P), which is then dephosphorylated to form the acireductone 1,2-dihydroxy-3-keto-5-methylthiopentene (DHK-MTPene). This Methylococcus capsulatus (strain ATCC 33009 / NCIMB 11132 / Bath) protein is Enolase-phosphatase E1.